The sequence spans 453 residues: Bifunctional protein GlmU (453 aa).

The pyrophosphorylase stretch occupies residues Met-1 to Arg-226. UDP-N-acetyl-alpha-D-glucosamine contacts are provided by residues Leu-8 to Gly-11, Lys-22, Gln-73, Gly-78 to Thr-79, Tyr-100 to Asp-102, Gly-137, Glu-151, Asn-166, and Asn-224. Position 102 (Asp-102) interacts with Mg(2+). Position 224 (Asn-224) interacts with Mg(2+). The linker stretch occupies residues Ala-227–Gln-247. The tract at residues Gly-248–Lys-453 is N-acetyltransferase. Residues Arg-330 and Lys-348 each coordinate UDP-N-acetyl-alpha-D-glucosamine. His-360 functions as the Proton acceptor in the catalytic mechanism. 2 residues coordinate UDP-N-acetyl-alpha-D-glucosamine: Tyr-363 and Asn-374. Acetyl-CoA-binding positions include Ala-377, Asn-383 to Tyr-384, Ser-402, Ala-420, and Arg-437.

It in the N-terminal section; belongs to the N-acetylglucosamine-1-phosphate uridyltransferase family. This sequence in the C-terminal section; belongs to the transferase hexapeptide repeat family. As to quaternary structure, homotrimer. Requires Mg(2+) as cofactor.

It localises to the cytoplasm. The catalysed reaction is alpha-D-glucosamine 1-phosphate + acetyl-CoA = N-acetyl-alpha-D-glucosamine 1-phosphate + CoA + H(+). It catalyses the reaction N-acetyl-alpha-D-glucosamine 1-phosphate + UTP + H(+) = UDP-N-acetyl-alpha-D-glucosamine + diphosphate. It functions in the pathway nucleotide-sugar biosynthesis; UDP-N-acetyl-alpha-D-glucosamine biosynthesis; N-acetyl-alpha-D-glucosamine 1-phosphate from alpha-D-glucosamine 6-phosphate (route II): step 2/2. Its pathway is nucleotide-sugar biosynthesis; UDP-N-acetyl-alpha-D-glucosamine biosynthesis; UDP-N-acetyl-alpha-D-glucosamine from N-acetyl-alpha-D-glucosamine 1-phosphate: step 1/1. It participates in bacterial outer membrane biogenesis; LPS lipid A biosynthesis. Catalyzes the last two sequential reactions in the de novo biosynthetic pathway for UDP-N-acetylglucosamine (UDP-GlcNAc). The C-terminal domain catalyzes the transfer of acetyl group from acetyl coenzyme A to glucosamine-1-phosphate (GlcN-1-P) to produce N-acetylglucosamine-1-phosphate (GlcNAc-1-P), which is converted into UDP-GlcNAc by the transfer of uridine 5-monophosphate (from uridine 5-triphosphate), a reaction catalyzed by the N-terminal domain. This Vibrio campbellii (strain ATCC BAA-1116) protein is Bifunctional protein GlmU.